Here is a 471-residue protein sequence, read N- to C-terminus: P2X purinoceptor 2 (471 aa).

Residues 1 to 42 (MAAAQPKYPAGATARRLARGCWSALWDYETPKVIVVRNRRLG) lie on the Cytoplasmic side of the membrane. Cystine bridges form between cysteine 21–cysteine 439, cysteine 125–cysteine 176, cysteine 136–cysteine 159, cysteine 142–cysteine 170, cysteine 226–cysteine 236, and cysteine 270–cysteine 279. Residues 43-63 (VLYRAVQLLILLYFVWYVFIV) traverse the membrane as a helical segment. At 64 to 337 (QKSYQESETG…IVHGQAGKFS (274 aa)) the chain is on the extracellular side. The ATP site is built by lysine 81 and lysine 83. Asparagine 133 is a glycosylation site (N-linked (GlcNAc...) asparagine). Residue asparagine 194 is glycosylated (N-linked (GlcNAc...) asparagine). Position 196 (threonine 196) interacts with ATP. Residues serine 296, asparagine 300, and arginine 302 each coordinate ATP. The N-linked (GlcNAc...) asparagine glycan is linked to asparagine 310. Residue lysine 319 participates in ATP binding. Residues 320-333 (AYGIRIDVIVHGQA) form a pore-forming motif region. The helical transmembrane segment at 338–358 (LIPTIINLATALTSVGVGSFL) threads the bilayer. Residues 359 to 471 (CDWILLTFMN…PTDPKGLAQL (113 aa)) lie on the Cytoplasmic side of the membrane. The tract at residues 400 to 471 (GQAPPEPGHR…PTDPKGLAQL (72 aa)) is disordered.

It belongs to the P2X receptor family. In terms of assembly, homotrimer and heterotrimer; functional P2XRs are organized as homomeric and heteromeric trimers. Homotrimer. Forms heterotrimer with P2RX1. Forms heterotrimer with P2RX6. Forms heterotrimer with P2RX3. As to expression, expressed in both the central and peripheral nervous system, as well as in the pituitary gland.

It is found in the cell membrane. It catalyses the reaction Ca(2+)(in) = Ca(2+)(out). It carries out the reaction K(+)(in) = K(+)(out). The catalysed reaction is Na(+)(in) = Na(+)(out). With respect to regulation, fast activation by external ATP. Exhibits slow desensitization during prolonged ATP activation. Not sensitive to the ATP agonist:alpha/beta-methylene-ATP. In terms of biological role, ATP-gated nonselective transmembrane cation channel permeable to potassium, sodium and calcium. Activation by extracellular ATP induces a variety of cellular responses, such as excitatory postsynaptic responses in sensory neurons, neuromuscular junctions (NMJ) formation, hearing, perception of taste and peristalsis. In the inner ear, regulates sound transduction and auditory neurotransmission, outer hair cell electromotility, inner ear gap junctions, and K(+) recycling. Mediates synaptic transmission between neurons and from neurons to smooth muscle. This is P2X purinoceptor 2 from Homo sapiens (Human).